The chain runs to 118 residues: MSRPSRLQRQVLSLYRELLRAGRGTPGAEARVRAEFRQHASLPRTDVLRIEYLYRRGRRQLQLLRSGHATAMGTFVRPRGPAEEPGDATAPGTRLDDGGAPKNSCEDTGARETRSDGR.

An LYR motif 1; required for interaction with HSC20 motif is present at residues 14–16; the sequence is LYR. The LYR motif 2; not required for interaction with HSC20 motif lies at 53-55; the sequence is LYR. Positions 53-65 are interaction with SDHB; the sequence is LYRRGRRQLQLLR. Residues 68 to 118 are disordered; it reads HATAMGTFVRPRGPAEEPGDATAPGTRLDDGGAPKNSCEDTGARETRSDGR. Residues 94–118 are compositionally biased toward basic and acidic residues; the sequence is RLDDGGAPKNSCEDTGARETRSDGR.

This sequence belongs to the complex I LYR family. SDHAF1 subfamily. Interacts with SDHB within an SDHA-SDHB subcomplex. Also interacts with the iron-sulfur transfer complex formed by HSC20, HSPA9 and ISCU through direct binding to HSC20. Binding of SDHAF1 to SDHB precedes and is necessary for recruitment of the iron-sulfur transfer complex by SDHAF1.

It is found in the mitochondrion matrix. Plays an essential role in the assembly of succinate dehydrogenase (SDH), an enzyme complex (also referred to as respiratory complex II) that is a component of both the tricarboxylic acid (TCA) cycle and the mitochondrial electron transport chain, and which couples the oxidation of succinate to fumarate with the reduction of ubiquinone (coenzyme Q) to ubiquinol. Promotes maturation of the iron-sulfur protein subunit Sdhb of the SDH catalytic dimer, protecting it from the deleterious effects of oxidants. May act together with SDHAF3. Contributes to iron-sulfur cluster incorporation into SDHB by binding to SDHB and recruiting the iron-sulfur transfer complex formed by HSC20, HSPA9 and ISCU through direct binding to HSC20. The protein is Succinate dehydrogenase assembly factor 1, mitochondrial of Mus musculus (Mouse).